Here is a 435-residue protein sequence, read N- to C-terminus: MKLAIVPFFRELTWSQVRNLFHFAARRLTEERLPQVAGSLTFTTVLALVPILTIALAIFTTFPLFNTFRTSLEAYFVHNLMPKGIANTILGYLTQFSSKATRLSAFGAVALIVTAVAMMLMIDRVFNQIWRVKTKRPIVQRILVYWAIVTLGPLLIGASMTFTSYLFTATDGVVRGVPFVGAVFYTSISILLSMVAFTSLYIVVPNRLVEWRDAVVGGLLAAIAFEIVKRLFAAFVIKVPTYTVVYGAVAAFPIFLVWVYLGWLITLAGAVVTAALPIVKYERWWHVPQPGSAFVDAMALIAVLYEARASADSAVVDTKLLRDRTQLGFDESEALLEKMLDAGWVARLKSEGPKRMQWGKRITDGLDRWVLLANPEYLTLADVYRVFVFDAGGNEMLAKKVECAVEQGLYQSLANYFRESSEGDLPGQHLPVHQP.

6 helical membrane passes run 45-65 (VLALVPILTIALAIFTTFPLF), 103-123 (LSAFGAVALIVTAVAMMLMID), 142-162 (ILVYWAIVTLGPLLIGASMTF), 177-197 (VPFVGAVFYTSISILLSMVAF), 208-228 (LVEWRDAVVGGLLAAIAFEIV), and 252-272 (FPIFLVWVYLGWLITLAGAVV).

Belongs to the UPF0761 family.

The protein resides in the cell inner membrane. This is UPF0761 membrane protein mma_2179 from Janthinobacterium sp. (strain Marseille) (Minibacterium massiliensis).